Consider the following 78-residue polypeptide: D-alanyl carrier protein (78 aa).

The Carrier domain occupies 1 to 78 (MEFKQEVLDV…NIVNKLTELK (78 aa)). At S36 the chain carries O-(pantetheine 4'-phosphoryl)serine.

It belongs to the DltC family. In terms of processing, 4'-phosphopantetheine is transferred from CoA to a specific serine of apo-DCP.

The protein resides in the cytoplasm. It participates in cell wall biogenesis; lipoteichoic acid biosynthesis. In terms of biological role, carrier protein involved in the D-alanylation of lipoteichoic acid (LTA). The loading of thioester-linked D-alanine onto DltC is catalyzed by D-alanine--D-alanyl carrier protein ligase DltA. The DltC-carried D-alanyl group is further transferred to cell membrane phosphatidylglycerol (PG) by forming an ester bond, probably catalyzed by DltD. D-alanylation of LTA plays an important role in modulating the properties of the cell wall in Gram-positive bacteria, influencing the net charge of the cell wall. This chain is D-alanyl carrier protein, found in Bacillus velezensis (strain DSM 23117 / BGSC 10A6 / LMG 26770 / FZB42) (Bacillus amyloliquefaciens subsp. plantarum).